The chain runs to 89 residues: Small ribosomal subunit protein uS15 (89 aa).

It belongs to the universal ribosomal protein uS15 family. Part of the 30S ribosomal subunit. Forms a bridge to the 50S subunit in the 70S ribosome, contacting the 23S rRNA.

One of the primary rRNA binding proteins, it binds directly to 16S rRNA where it helps nucleate assembly of the platform of the 30S subunit by binding and bridging several RNA helices of the 16S rRNA. In terms of biological role, forms an intersubunit bridge (bridge B4) with the 23S rRNA of the 50S subunit in the ribosome. The sequence is that of Small ribosomal subunit protein uS15 from Staphylococcus aureus (strain JH1).